The following is a 375-amino-acid chain: MPSGSGFHNIEEAGEKARKRDDWIAISNFHPGWFSVNMGTGITAILLQNLPYQFPGLHYIAVVLFILNVIIFFLFLTISITRYCLWPDKFKAMLAHPAHSMLLGTFPMGFATIINCIVFICVPVWGEWASRFAWGLWWIDAAVSVAICYFVPFMLMTKHTSSLETMTAAWLLPIVAPVVAAASGGVVADSLQNDTHALITILVCYAMWGSAVPLAMVILVIYFQRLAIHKLVPRAAIVSALLPIGPLGQGGFGLMQLGVVAKRVFPRLDFLAPIAGDIFYVMGAFIAMIMWGFGLIWLWFALASFTRGKFYFNIGWWAFTFPLGVFTTATTQMGKEFNSPFFDILGTFFSIVVTCMWVLVFALTVYKSCTKELFR.

The Cytoplasmic portion of the chain corresponds to 1–25 (MPSGSGFHNIEEAGEKARKRDDWIA). A helical membrane pass occupies residues 26-46 (ISNFHPGWFSVNMGTGITAIL). At 47 to 59 (LQNLPYQFPGLHY) the chain is on the extracellular side. The chain crosses the membrane as a helical span at residues 60-80 (IAVVLFILNVIIFFLFLTISI). Over 81–101 (TRYCLWPDKFKAMLAHPAHSM) the chain is Cytoplasmic. Residues 102-122 (LLGTFPMGFATIINCIVFICV) form a helical membrane-spanning segment. Residues 123–135 (PVWGEWASRFAWG) are Extracellular-facing. A helical membrane pass occupies residues 136-156 (LWWIDAAVSVAICYFVPFMLM). Over 157–167 (TKHTSSLETMT) the chain is Cytoplasmic. The helical transmembrane segment at 168-188 (AAWLLPIVAPVVAAASGGVVA) threads the bilayer. Residues 189 to 200 (DSLQNDTHALIT) are Extracellular-facing. N193 carries an N-linked (GlcNAc...) asparagine glycan. A helical membrane pass occupies residues 201 to 221 (ILVCYAMWGSAVPLAMVILVI). Over 222–234 (YFQRLAIHKLVPR) the chain is Cytoplasmic. The chain crosses the membrane as a helical span at residues 235–255 (AAIVSALLPIGPLGQGGFGLM). At 256-277 (QLGVVAKRVFPRLDFLAPIAGD) the chain is on the extracellular side. Residues 278–298 (IFYVMGAFIAMIMWGFGLIWL) traverse the membrane as a helical segment. Over 299–309 (WFALASFTRGK) the chain is Cytoplasmic. Residues 310–330 (FYFNIGWWAFTFPLGVFTTAT) form a helical membrane-spanning segment. The Extracellular portion of the chain corresponds to 331–343 (TQMGKEFNSPFFD). The helical transmembrane segment at 344-364 (ILGTFFSIVVTCMWVLVFALT) threads the bilayer. Over 365–375 (VYKSCTKELFR) the chain is Cytoplasmic.

Belongs to the tellurite-resistance/dicarboxylate transporter (TDT) family.

The protein resides in the cell membrane. Functionally, sulphite efflux pump required for the secretion of sulphite as a reducing agent. In the presence of sulphite, cystine in keratin is directly cleaved to cysteine and S-sulphocysteine, and thereby, reduced proteins become accessible to hydrolysis by a variety of secreted endo- and exoproteases. Excretion of sulphite mediated by an efflux pump also represents a detoxification pathway for dermatophytes during infection of the epidermal stratum corneum, hair and nails, which are rich in cysteine. This chain is Sulfite efflux pump SSU1 (SSU1), found in Trichophyton rubrum (Athlete's foot fungus).